The following is a 447-amino-acid chain: Tetratricopeptide repeat protein 23 (447 aa).

TPR repeat units follow at residues 45–78 (LHLCEEKAKSYSNSHEYKQAVHELVRCVALTRIC), 137–170 (IELFHTMGRALLSLQKFKEAAENLTKAERLSKEL), 186–219 (ARIRLSFAQVYQGQKKSKEALSHYQAALEYVEIS), and 356–389 (AETYRLLGGADLAQGNHSGARKKLKKCLQIQTLL).

As to quaternary structure, found Associated with the EvC complex composed of EFCAB7, IQCE, EVC2 and EVC.

The protein resides in the cell projection. The protein localises to the cilium. Participates positively in the ciliary Hedgehog (Hh) signaling. This chain is Tetratricopeptide repeat protein 23 (TTC23), found in Homo sapiens (Human).